Reading from the N-terminus, the 125-residue chain is Small ribosomal subunit protein uS12 (125 aa).

Aspartate 89 carries the 3-methylthioaspartic acid modification. The disordered stretch occupies residues 101-125 (SLDTAGVKDRKQSRSKYGAKRPKKA). Positions 113–125 (SRSKYGAKRPKKA) are enriched in basic residues.

Belongs to the universal ribosomal protein uS12 family. In terms of assembly, part of the 30S ribosomal subunit. Contacts proteins S8 and S17. May interact with IF1 in the 30S initiation complex.

In terms of biological role, with S4 and S5 plays an important role in translational accuracy. Its function is as follows. Interacts with and stabilizes bases of the 16S rRNA that are involved in tRNA selection in the A site and with the mRNA backbone. Located at the interface of the 30S and 50S subunits, it traverses the body of the 30S subunit contacting proteins on the other side and probably holding the rRNA structure together. The combined cluster of proteins S8, S12 and S17 appears to hold together the shoulder and platform of the 30S subunit. This Thiobacillus denitrificans (strain ATCC 25259 / T1) protein is Small ribosomal subunit protein uS12.